We begin with the raw amino-acid sequence, 120 residues long: NAD(P)H-quinone oxidoreductase subunit 3, chloroplastic (120 aa).

The next 3 helical transmembrane spans lie at 10 to 30 (FWVF…ISGV), 64 to 84 (IFAL…PWAM), and 88 to 108 (VLGV…IVGS).

Belongs to the complex I subunit 3 family. In terms of assembly, NDH is composed of at least 16 different subunits, 5 of which are encoded in the nucleus.

It is found in the plastid. The protein resides in the chloroplast thylakoid membrane. The enzyme catalyses a plastoquinone + NADH + (n+1) H(+)(in) = a plastoquinol + NAD(+) + n H(+)(out). It carries out the reaction a plastoquinone + NADPH + (n+1) H(+)(in) = a plastoquinol + NADP(+) + n H(+)(out). Functionally, NDH shuttles electrons from NAD(P)H:plastoquinone, via FMN and iron-sulfur (Fe-S) centers, to quinones in the photosynthetic chain and possibly in a chloroplast respiratory chain. The immediate electron acceptor for the enzyme in this species is believed to be plastoquinone. Couples the redox reaction to proton translocation, and thus conserves the redox energy in a proton gradient. The chain is NAD(P)H-quinone oxidoreductase subunit 3, chloroplastic from Pelargonium hortorum (Common geranium).